The sequence spans 257 residues: Ribosome-inactivating protein charybdin (257 aa).

The active site involves E167. A disulfide bond links C217 and C254.

It belongs to the ribosome-inactivating protein family. Type 1 RIP subfamily.

It carries out the reaction Endohydrolysis of the N-glycosidic bond at one specific adenosine on the 28S rRNA.. In terms of biological role, inhibits translation in rabbit reticulocytes. The chain is Ribosome-inactivating protein charybdin from Drimia maritima (Sea squill).